Here is a 314-residue protein sequence, read N- to C-terminus: Methionyl-tRNA formyltransferase (314 aa).

Ser-111–Pro-114 contributes to the (6S)-5,6,7,8-tetrahydrofolate binding site.

This sequence belongs to the Fmt family.

It catalyses the reaction L-methionyl-tRNA(fMet) + (6R)-10-formyltetrahydrofolate = N-formyl-L-methionyl-tRNA(fMet) + (6S)-5,6,7,8-tetrahydrofolate + H(+). Functionally, attaches a formyl group to the free amino group of methionyl-tRNA(fMet). The formyl group appears to play a dual role in the initiator identity of N-formylmethionyl-tRNA by promoting its recognition by IF2 and preventing the misappropriation of this tRNA by the elongation apparatus. In Chlorobium luteolum (strain DSM 273 / BCRC 81028 / 2530) (Pelodictyon luteolum), this protein is Methionyl-tRNA formyltransferase.